Here is a 638-residue protein sequence, read N- to C-terminus: Glucans biosynthesis glucosyltransferase H (638 aa).

6 helical membrane-spanning segments follow: residues F60 to W82, F97 to V119, I415 to V437, L464 to L486, L499 to Y521, and L578 to S600.

This sequence belongs to the glycosyltransferase 2 family. OpgH subfamily.

It localises to the cell inner membrane. The protein operates within glycan metabolism; osmoregulated periplasmic glucan (OPG) biosynthesis. Functionally, involved in the biosynthesis of osmoregulated periplasmic glucans (OPGs). The protein is Glucans biosynthesis glucosyltransferase H of Xylella fastidiosa (strain 9a5c).